A 434-amino-acid chain; its full sequence is GPI-anchor transamidase component PIGU (434 aa).

Over M1 to A3 the chain is Cytoplasmic. A helical transmembrane segment spans residues P4–S22. The Lumenal portion of the chain corresponds to S23–D78. Residues Y79–I99 form a helical membrane-spanning segment. Over Q100–I136 the chain is Cytoplasmic. 4 helical membrane passes run P137 to S157, T158 to S177, V178 to L193, and Y194 to L204. Residues Y205–F221 lie on the Cytoplasmic side of the membrane. Residue K215 coordinates a cardiolipin. The chain crosses the membrane as a helical span at residues W222–S243. At F244–S285 the chain is on the lumenal side. Residues L286–I305 form a helical membrane-spanning segment. At K306–H310 the chain is on the cytoplasmic side. Residue K308 participates in a cardiolipin binding. Helical transmembrane passes span P311–T330 and V331–W344. The Cytoplasmic segment spans residues N345–N353. A helical membrane pass occupies residues I354–L371. Over W372–S383 the chain is Lumenal. A 2-acyl-6-[6-phosphoethanolamine-alpha-D-mannosyl-(1-&gt;2)-6-phosphoethanolamine-alpha-D-mannosyl-(1-&gt;6)-2-phosphoethanolamine-alpha-D-mannosyl-(1-&gt;4)-alpha-D-glucosaminyl]-1-(1-radyl,2-acyl-sn-glycero-3-phospho)-1D-myo-inositol-binding residues include N382 and N384. The chain crosses the membrane as a helical span at residues N384–F405. Over Y406–K434 the chain is Cytoplasmic.

Belongs to the PIGU family. Heteropentamer. Part of the GPI-anchor transamidase complex, consisting of PIGK, PIGT, PIGS, PIGU and GAA1.

The protein resides in the endoplasmic reticulum membrane. Its pathway is glycolipid biosynthesis; glycosylphosphatidylinositol-anchor biosynthesis. In terms of biological role, component of the glycosylphosphatidylinositol-anchor (GPI-anchor) transamidase (GPI-T) complex that catalyzes the formation of the linkage between a proprotein and a GPI-anchor and participates in GPI anchored protein biosynthesis. Binds the lipid portion of GPI-anchor. May act as an organizer in the transmembrane layer to recruit other subunits, and thus is essential for assembly of the complex. The sequence is that of GPI-anchor transamidase component PIGU from Mus musculus (Mouse).